We begin with the raw amino-acid sequence, 122 residues long: Small ribosomal subunit protein bS16 (122 aa).

It belongs to the bacterial ribosomal protein bS16 family.

The polypeptide is Small ribosomal subunit protein bS16 (Prochlorococcus marinus (strain MIT 9313)).